The sequence spans 120 residues: Large ribosomal subunit protein eL18 (120 aa).

The protein belongs to the eukaryotic ribosomal protein eL18 family.

This Pyrococcus abyssi (strain GE5 / Orsay) protein is Large ribosomal subunit protein eL18.